The chain runs to 597 residues: Mediator of RNA polymerase II transcription subunit 26 (597 aa).

Residues Glu10 to Val87 enclose the TFIIS N-terminal domain. Disordered regions lie at residues Gly96 to Pro236, Leu254 to Lys418, and Thr436 to Gln459. A compositionally biased stretch (basic and acidic residues) spans Gln128–Thr147. The segment covering His226–Pro236 has biased composition (polar residues). Over residues Pro262–Arg273 the composition is skewed to low complexity. Residues Lys321–Val338 are compositionally biased toward basic and acidic residues. The span at Leu341–Ser377 shows a compositional bias: polar residues. Residues Glu450–Gln459 show a composition bias toward basic and acidic residues.

The protein belongs to the Mediator complex subunit 26 family. As to quaternary structure, component of the Mediator complex.

It is found in the nucleus. In terms of biological role, component of the Mediator complex, a coactivator involved in the regulated transcription of nearly all RNA polymerase II-dependent genes. Mediator functions as a bridge to convey information from gene-specific regulatory proteins to the basal RNA polymerase II transcription machinery. Mediator is recruited to promoters by direct interactions with regulatory proteins and serves as a scaffold for the assembly of a functional preinitiation complex with RNA polymerase II and the general transcription factors. This chain is Mediator of RNA polymerase II transcription subunit 26 (med26), found in Xenopus laevis (African clawed frog).